The chain runs to 187 residues: Ribosome maturation factor RimM (187 aa).

The region spanning 94 to 168 (DDEFYHADLV…RVIVDMPDGL (75 aa)) is the PRC barrel domain. Residues 167 to 187 (GLIGGDKPDTSDTAPLGQDFD) form a disordered region.

The protein belongs to the RimM family. As to quaternary structure, binds ribosomal protein uS19.

The protein resides in the cytoplasm. Functionally, an accessory protein needed during the final step in the assembly of 30S ribosomal subunit, possibly for assembly of the head region. Essential for efficient processing of 16S rRNA. May be needed both before and after RbfA during the maturation of 16S rRNA. It has affinity for free ribosomal 30S subunits but not for 70S ribosomes. This Jannaschia sp. (strain CCS1) protein is Ribosome maturation factor RimM.